The primary structure comprises 156 residues: Small ribosomal subunit protein uS7 (156 aa).

This sequence belongs to the universal ribosomal protein uS7 family. Part of the 30S ribosomal subunit. Contacts proteins S9 and S11.

Functionally, one of the primary rRNA binding proteins, it binds directly to 16S rRNA where it nucleates assembly of the head domain of the 30S subunit. Is located at the subunit interface close to the decoding center, probably blocks exit of the E-site tRNA. This chain is Small ribosomal subunit protein uS7, found in Rhizorhabdus wittichii (strain DSM 6014 / CCUG 31198 / JCM 15750 / NBRC 105917 / EY 4224 / RW1) (Sphingomonas wittichii).